The chain runs to 269 residues: MCLVNEFVSNSNMKPALNVSGDEKELILQLRRYLEEKLTYLLDQNGTVSIGVSGGSMPRVFSKAILSLPQEQLNWKRIRIFMVDERNVDLDSEESNQGEYLRLFPNELRDVFVPMQIFKDPCLTAQHYEISLRKYLLPEQLNNTARFDILFLGVGPDGHTASIFPGKERLEKITELNWVSVITDSPKPPPSRITLTLQTLQHAKNVAFIICGKQKAEIVRGICDRDQKYPAAQARPFNDKLTLFLDEDAATGVPDRDSSDSDSPPPFDG.

The interval 248-269 is disordered; that stretch reads DAATGVPDRDSSDSDSPPPFDG.

This sequence belongs to the glucosamine/galactosamine-6-phosphate isomerase family. 6-phosphogluconolactonase subfamily.

It is found in the nucleus. It carries out the reaction 6-phospho-D-glucono-1,5-lactone + H2O = 6-phospho-D-gluconate + H(+). Its pathway is carbohydrate degradation; pentose phosphate pathway; D-ribulose 5-phosphate from D-glucose 6-phosphate (oxidative stage): step 2/3. Functionally, hydrolysis of 6-phosphogluconolactone to 6-phosphogluconate. The sequence is that of Putative 6-phosphogluconolactonase from Caenorhabditis elegans.